A 538-amino-acid chain; its full sequence is Cytochrome c-552 (538 aa).

The signal sequence occupies residues Met-1–Ala-55. Residue His-133 coordinates heme c. Heme contacts are provided by Cys-161, Cys-164, and Lys-165. Residues Cys-199, Cys-202, His-203, Cys-264, Cys-267, and His-268 each contribute to the heme c site. 4 residues coordinate Ca(2+): Glu-270, Tyr-271, Lys-316, and Gln-318. Position 271 (Tyr-271) interacts with substrate. His-319 contacts substrate. Positions 330, 337, 340, 341, 356, 369, 372, 373, and 448 each coordinate heme c.

It belongs to the cytochrome c-552 family. The cofactor is Ca(2+). Heme c serves as cofactor.

It is found in the periplasm. The catalysed reaction is 6 Fe(III)-[cytochrome c] + NH4(+) + 2 H2O = 6 Fe(II)-[cytochrome c] + nitrite + 8 H(+). It functions in the pathway nitrogen metabolism; nitrate reduction (assimilation). Functionally, catalyzes the reduction of nitrite to ammonia, consuming six electrons in the process. The sequence is that of Cytochrome c-552 from Haemophilus influenzae (strain 86-028NP).